Here is a 98-residue protein sequence, read N- to C-terminus: Small ribosomal subunit protein bS18c (98 aa).

A compositionally biased stretch (basic and acidic residues) spans 1-13 (MSKQSFDFKRYKP). The segment at 1-26 (MSKQSFDFKRYKPEAPSGSRKRPLKK) is disordered.

This sequence belongs to the bacterial ribosomal protein bS18 family. As to quaternary structure, part of the 30S ribosomal subunit.

The protein resides in the plastid. Its subcellular location is the chloroplast. The protein is Small ribosomal subunit protein bS18c of Gnetum parvifolium (Small-leaved jointfir).